A 340-amino-acid polypeptide reads, in one-letter code: GTP 3',8-cyclase (340 aa).

The region spanning 20-246 is the Radical SAM core domain; it reads RFQRQYTYLR…PKAVNDGPAK (227 aa). GTP is bound at residue R29. C36 and C40 together coordinate [4Fe-4S] cluster. Y42 is a binding site for S-adenosyl-L-methionine. C43 contacts [4Fe-4S] cluster. R79 is a GTP binding site. G83 serves as a coordination point for S-adenosyl-L-methionine. T110 serves as a coordination point for GTP. Residue S134 participates in S-adenosyl-L-methionine binding. K171 provides a ligand contact to GTP. S-adenosyl-L-methionine is bound at residue M205. The [4Fe-4S] cluster site is built by C268 and C271. 273 to 275 provides a ligand contact to GTP; it reads RLR. Residue C285 coordinates [4Fe-4S] cluster.

It belongs to the radical SAM superfamily. MoaA family. In terms of assembly, monomer and homodimer. It depends on [4Fe-4S] cluster as a cofactor.

The enzyme catalyses GTP + AH2 + S-adenosyl-L-methionine = (8S)-3',8-cyclo-7,8-dihydroguanosine 5'-triphosphate + 5'-deoxyadenosine + L-methionine + A + H(+). Its pathway is cofactor biosynthesis; molybdopterin biosynthesis. In terms of biological role, catalyzes the cyclization of GTP to (8S)-3',8-cyclo-7,8-dihydroguanosine 5'-triphosphate. The chain is GTP 3',8-cyclase from Haemophilus ducreyi (strain 35000HP / ATCC 700724).